The following is a 343-amino-acid chain: Ribosomal RNA small subunit methyltransferase H (343 aa).

S-adenosyl-L-methionine is bound by residues 39-41 (AGH), Asp-58, Phe-87, Asp-108, and Gln-115.

The protein belongs to the methyltransferase superfamily. RsmH family.

Its subcellular location is the cytoplasm. It catalyses the reaction cytidine(1402) in 16S rRNA + S-adenosyl-L-methionine = N(4)-methylcytidine(1402) in 16S rRNA + S-adenosyl-L-homocysteine + H(+). In terms of biological role, specifically methylates the N4 position of cytidine in position 1402 (C1402) of 16S rRNA. This chain is Ribosomal RNA small subunit methyltransferase H, found in Bifidobacterium adolescentis (strain ATCC 15703 / DSM 20083 / NCTC 11814 / E194a).